Reading from the N-terminus, the 210-residue chain is Fibrillarin-like rRNA/tRNA 2'-O-methyltransferase (210 aa).

S-adenosyl-L-methionine contacts are provided by residues Thr-70–Thr-71, Glu-88–Tyr-89, Asp-113–Ala-114, and Asp-133–Gln-136.

The protein belongs to the methyltransferase superfamily. Fibrillarin family. As to quaternary structure, interacts with nop5. Component of box C/D small ribonucleoprotein (sRNP) particles that contain rpl7ae, FlpA and nop5, plus a guide RNA.

Its function is as follows. Involved in pre-rRNA and tRNA processing. Utilizes the methyl donor S-adenosyl-L-methionine to catalyze the site-specific 2'-hydroxyl methylation of ribose moieties in rRNA and tRNA. Site specificity is provided by a guide RNA that base pairs with the substrate. Methylation occurs at a characteristic distance from the sequence involved in base pairing with the guide RNA. The protein is Fibrillarin-like rRNA/tRNA 2'-O-methyltransferase of Archaeoglobus fulgidus (strain ATCC 49558 / DSM 4304 / JCM 9628 / NBRC 100126 / VC-16).